Here is an 82-residue protein sequence, read N- to C-terminus: RNA-binding protein GTNG_0100 (82 aa).

This sequence belongs to the eukaryotic ribosomal protein eL8 family.

The protein is RNA-binding protein GTNG_0100 of Geobacillus thermodenitrificans (strain NG80-2).